The sequence spans 613 residues: Protein starmaker (613 aa).

Positions 1–20 are cleaved as a signal peptide; sequence MLSRTVFVPLILAFVGVSIS. The segment at 42-613 is disordered; that stretch reads FTVQFNVGTP…DGRKTSMPIS (572 aa). Composition is skewed to basic and acidic residues over residues 62 to 72, 117 to 132, 147 to 193, 206 to 284, and 291 to 449; these read DGKDSAEKNEA, SAEK…DKPD, DASH…KPEG, SAEK…KSDD, and DEQK…HSDS. Acidic residues predominate over residues 450-465; that stretch reads DSDSDSDSDSDSDSDS. 3 stretches are compositionally biased toward basic and acidic residues: residues 467–482, 509–521, and 538–554; these read SNSR…SSES, DKDS…KTDS, and DDSK…TAEK. Positions 555-573 are enriched in acidic residues; that stretch reads TDEDSHDVSDDDDDIDAHD. Residues 574 to 607 are compositionally biased toward basic and acidic residues; sequence DEAGVEHGTDEASKPHQEPDHHDDTTHGSDDGRK.

It localises to the secreted. In terms of biological role, essential for the formation of otoliths in the inner ear of developing larvae and for the perception of gravity and acceleration. May be one of the organic components of the ortholiths. This is Protein starmaker (stm) from Danio rerio (Zebrafish).